A 311-amino-acid chain; its full sequence is Coproporphyrin III ferrochelatase 1 (311 aa).

Fe-coproporphyrin III contacts are provided by residues tyrosine 12, arginine 29, 45–46 (RY), serine 53, and tyrosine 124. Fe(2+) contacts are provided by histidine 182 and glutamate 263.

The protein belongs to the ferrochelatase family.

The protein resides in the cytoplasm. It catalyses the reaction Fe-coproporphyrin III + 2 H(+) = coproporphyrin III + Fe(2+). The protein operates within porphyrin-containing compound metabolism; protoheme biosynthesis. In terms of biological role, involved in coproporphyrin-dependent heme b biosynthesis. Catalyzes the insertion of ferrous iron into coproporphyrin III to form Fe-coproporphyrin III. This Bacillus thuringiensis subsp. konkukian (strain 97-27) protein is Coproporphyrin III ferrochelatase 1.